Here is a 72-residue protein sequence, read N- to C-terminus: Gas vesicle protein A (72 aa).

The protein belongs to the gas vesicle GvpA family. In terms of assembly, the gas vesicle shell is 2 nm thick and consists of a single layer of this protein. It forms helical ribs nearly perpendicular to the long axis of the vesicle.

It is found in the gas vesicle shell. Gas vesicles are hollow, gas filled proteinaceous nanostructures found in some microorganisms. During planktonic growth they allow positioning of the organism at a favorable depth for light or nutrient acquisition. GvpA forms the protein shell. The chain is Gas vesicle protein A from Synechococcus sp. (strain JA-3-3Ab) (Cyanobacteria bacterium Yellowstone A-Prime).